A 412-amino-acid polypeptide reads, in one-letter code: Tyrosine--tRNA ligase (412 aa).

L-tyrosine is bound at residue Tyr31. A 'HIGH' region motif is present at residues 36 to 45 (PTAPSLHIGH). L-tyrosine is bound by residues Tyr162 and Gln166. The 'KMSKS' region signature appears at 222–226 (KIGKT). Residue Lys225 coordinates ATP. In terms of domain architecture, S4 RNA-binding spans 345 to 411 (KRWLDIVVEL…GKRKKQVIDL (67 aa)).

This sequence belongs to the class-I aminoacyl-tRNA synthetase family. TyrS type 1 subfamily. In terms of assembly, homodimer.

The protein resides in the cytoplasm. The catalysed reaction is tRNA(Tyr) + L-tyrosine + ATP = L-tyrosyl-tRNA(Tyr) + AMP + diphosphate + H(+). Its function is as follows. Catalyzes the attachment of tyrosine to tRNA(Tyr) in a two-step reaction: tyrosine is first activated by ATP to form Tyr-AMP and then transferred to the acceptor end of tRNA(Tyr). This Chlamydia trachomatis serovar A (strain ATCC VR-571B / DSM 19440 / HAR-13) protein is Tyrosine--tRNA ligase.